A 226-amino-acid polypeptide reads, in one-letter code: Ornithine decarboxylase antizyme (226 aa).

The protein belongs to the ODC antizyme family. As to quaternary structure, interacts with ODC and thereby sterically blocks ODC homodimerization.

In terms of biological role, ornithine decarboxylase (ODC) antizyme protein that negatively regulates ODC activity and intracellular polyamine biosynthesis in response to increased intracellular polyamine levels. Binds to ODC monomers, inhibiting the assembly of the functional ODC homodimer, and targets the monomers for ubiquitin-independent proteolytic destruction by the 26S proteasome. The sequence is that of Ornithine decarboxylase antizyme (spa1) from Schizosaccharomyces japonicus (Fission yeast).